The following is a 162-amino-acid chain: MTKETYVSATAVVSGSFLSGSMMSLSALVIPLFLDTIDDGPQLLRQWARLYHYGSIYMPALCVATCGIYGYVALSKRAAISPLWSPYVLAAVSTLAMVPFTWWVMVPTNNTLFGLHRSAESTELGVVQVLVVKWAWLHVVRSLYPLFGAFLGFRALIRELRT.

Helical transmembrane passes span 17–37 (FLSG…LDTI), 54–74 (GSIY…YVAL), and 86–106 (PYVL…WVMV). An N-linked (GlcNAc...) asparagine glycan is attached at Asn-109. Residues 130–150 (LVVKWAWLHVVRSLYPLFGAF) form a helical membrane-spanning segment.

This sequence belongs to the anthrone oxygenase family.

The protein resides in the membrane. The enzyme catalyses emodin anthrone + O2 = emodin + H2O + H(+). It functions in the pathway secondary metabolite biosynthesis. Its function is as follows. Anthrone oxygenase; part of the gene cluster that mediates the biosynthesis of the tetrahydroxanthone dimer neosartorin, which exhibits antibacterial activity. The two different monomeric units appear to be synthesized by the same set of enzymes, among which the Baeyer-Villiger monooxygenase nsrF is the key enzyme for the divergence of the biosynthetic routes. The pathway begins with the synthesis of atrochrysone thioester by the polyketide synthase nsrB. The atrochrysone carboxyl ACP thioesterase nsrC then breaks the thioester bond and releases the atrochrysone carboxylic acid from AacuL. Atrochrysone carboxylic acid is decarboxylated by the decarboxylase nsrE, and oxidized by the anthrone oxygenase nsrD to yield emodin. Emodin is then reduced to emodin hydroquinone by the oxidoreductase nsrR. A-ring reduction by the short chain dehydrogenase nsrJ, dehydration by the scytalone dehydratase-like protein nsrI and probable spontaneous re-oxidation, results in overall deoxygenation to chrysophanol. The Baeyer-Villiger monooxygenase nsrF accepts chrysophanol as a substrate to insert one oxygen atom at two different positions to yield the precursors of both monomric units. NsrF is promiscuous/flexible in interacting with the 2 (non methylated and methylated) aromatic rings of chrysophanol, thus diverging the biosynthetic pathway at this point. After the hydrolysis of the lactones, methylesterification by the methyltransferase nsrG yields respectively moniliphenone and 2,2',6'-trihydroxy-4-methyl-6-methoxya-cyldiphenylmethanone. The next steps are the hydroxylation by the FAD-dependent monooxygenase nsrK, followed by isomerization by the monooxygenase nsrQ. The short chain dehydrogenase/reductase nsrO then catalyzes the C-5 ketoreduction to give the xanthone skeleton of blennolide C and 5-acetylblennolide A. The acetyltransferase nsrL has a strict substrate specificity and uses only blennolide A but not blennolide C to yield 5-acetylblennolide A as the single-acetylated product. In the final step of the biosynthesis, the heterodimerization of the 2 xanthones, blennolide C and 5-acetylblennolide A, is catalyzed by the cytochrome P450 monooxygenase nsrP. NsrP can utilize at least three different xanthones as its substrates to perform the dimerization reaction. This chain is Anthrone oxygenase nsrD, found in Aspergillus novofumigatus (strain IBT 16806).